Consider the following 218-residue polypeptide: Cytochrome b6 (218 aa).

The chain crosses the membrane as a helical span at residues 35–55; that stretch reads IFYCLGGITLVCFLIQFATGF. Residue cysteine 38 participates in heme c binding. The heme b site is built by histidine 89 and histidine 103. A run of 3 helical transmembrane segments spans residues 93–113, 119–139, and 189–209; these read ASMMVLMLILHVFRVYLTGGF, LTWVTGVVMAVITVAFGVTGY, and LHTFVLPWSLAVFMLMHFLMI. Residues histidine 190 and histidine 205 each contribute to the heme b site.

The protein belongs to the cytochrome b family. PetB subfamily. The 4 large subunits of the cytochrome b6-f complex are cytochrome b6, subunit IV (17 kDa polypeptide, PetD), cytochrome f and the Rieske protein, while the 4 small subunits are PetG, PetL, PetM and PetN. The complex functions as a dimer. Heme b serves as cofactor. The cofactor is heme c.

Its subcellular location is the cellular thylakoid membrane. Its function is as follows. Component of the cytochrome b6-f complex, which mediates electron transfer between photosystem II (PSII) and photosystem I (PSI), cyclic electron flow around PSI, and state transitions. The polypeptide is Cytochrome b6 (Prochlorococcus marinus (strain MIT 9215)).